The sequence spans 130 residues: MVQIIFDSKTGNVQRFVNKTDFQLIRKVDETDHVDTPFVLVTYTTNFGQVPASTQSFLEKYAHLLLGVAASGNKVWGDNFAKSADTISRQYQVPILHKFELSGTSKDVELFTQEVERVVTKSSAKMDPVK.

The protein belongs to the NrdI family.

Probably involved in ribonucleotide reductase function. This is Protein NrdI from Bacillus velezensis (strain DSM 23117 / BGSC 10A6 / LMG 26770 / FZB42) (Bacillus amyloliquefaciens subsp. plantarum).